The sequence spans 20 residues: Small ribosomal subunit protein bS20 (20 aa).

Positions Ala1–Asn20 are disordered. Over residues Arg11–Asn20 the composition is skewed to basic and acidic residues.

Belongs to the bacterial ribosomal protein bS20 family.

In terms of biological role, binds directly to 16S ribosomal RNA. The protein is Small ribosomal subunit protein bS20 (rpsT) of Brevundimonas vesicularis (Pseudomonas vesicularis).